The following is a 217-amino-acid chain: Ribulose-phosphate 3-epimerase (217 aa).

Substrate is bound at residue Ser6. A divalent metal cation contacts are provided by His29, Asp31, and His62. Asp31 functions as the Proton acceptor in the catalytic mechanism. Substrate contacts are provided by residues His62, 138–141, 171–173, and 193–194; these read GFGG, DGG, and GS. Residue Asp171 coordinates a divalent metal cation. The Proton donor role is filled by Asp171.

It belongs to the ribulose-phosphate 3-epimerase family. Requires a divalent metal cation as cofactor.

The catalysed reaction is D-ribulose 5-phosphate = D-xylulose 5-phosphate. Its pathway is carbohydrate degradation. Catalyzes the reversible epimerization of D-ribulose 5-phosphate to D-xylulose 5-phosphate. The polypeptide is Ribulose-phosphate 3-epimerase (Helicobacter pylori (strain ATCC 700392 / 26695) (Campylobacter pylori)).